Here is a 148-residue protein sequence, read N- to C-terminus: Suppressor APC domain-containing protein 1 (148 aa).

The disordered stretch occupies residues 120–148 (SRQQKGVTQPKEEMAQRGCTKGPRGPTRV).

In Homo sapiens (Human), this protein is Suppressor APC domain-containing protein 1 (SAPCD1).